The chain runs to 1806 residues: uncharacterized protein (1806 aa).

2 disordered regions span residues 38–131 (EASG…SPLF) and 158–282 (KAVS…KPRP). The segment covering 51–70 (KSPLRSPARLLPLPRLAPKP) has biased composition (low complexity). 7 positions are modified to phosphoserine: S52, S56, S79, S87, S88, S92, and S128. Residues 82–100 (PSLRPSSTGPSPSGGLSEE) are compositionally biased toward low complexity. Over residues 226 to 236 (DTARPLVEPRP) the composition is skewed to basic and acidic residues. Phosphoserine is present on residues S244 and S284. 4 disordered regions span residues 299–320 (RKVA…ERPR), 355–431 (KEKM…GGEW), 456–604 (SESP…PEDD), and 627–696 (QSGR…ELRP). S366 bears the Phosphoserine mark. T378 carries the phosphothreonine modification. S384 bears the Phosphoserine mark. A compositionally biased stretch (basic and acidic residues) spans 386–400 (WEEKAKLDPEPEKAA). The residue at position 404 (S404) is a Phosphoserine. Basic and acidic residues predominate over residues 412-422 (ELAEVKSRVAD). Residues 456–470 (SESPLATPASPSAAP) are compositionally biased toward low complexity. A phosphoserine mark is found at S458 and S508. Positions 514-523 (LFSSSASSNE) are enriched in polar residues. Composition is skewed to basic and acidic residues over residues 524-549 (VKYE…EGHS) and 564-573 (TLRDKSRQTE). Phosphothreonine is present on T600. Composition is skewed to basic and acidic residues over residues 641–652 (AHARVSEPRPRP) and 661–674 (DPPD…ENSR). Residue S749 is modified to Phosphoserine. 3 disordered regions span residues 860 to 901 (QHEG…QART), 969 to 989 (SPHV…ALRK), and 1000 to 1019 (QEVN…KQGS). Polar residues predominate over residues 889–900 (RATNGPSDSQAR). Phosphoserine is present on residues S969 and S981. Over residues 969–978 (SPHVGHRRTD) the composition is skewed to basic and acidic residues. At T1059 the chain carries Phosphothreonine. A phosphoserine mark is found at S1063 and S1154. Positions 1134–1178 (RGSEDGPRPQSNWKESANKMSPSGGAPQTTPTLRSRPKDLPVRRK) are disordered. The segment covering 1142–1166 (PQSNWKESANKMSPSGGAPQTTPTL) has biased composition (polar residues). Position 1163 is a phosphothreonine (T1163). Positions 1169–1178 (RPKDLPVRRK) are enriched in basic and acidic residues. Phosphothreonine occurs at positions 1179 and 1185. Disordered regions lie at residues 1216–1265 (PGEA…PASS) and 1291–1493 (KSSP…VASV). At S1224 the chain carries Phosphoserine. T1226 carries the phosphothreonine modification. 2 stretches are compositionally biased toward basic and acidic residues: residues 1244–1254 (EQRRRSLKEMP) and 1317–1331 (DPRK…DRKA). Residue S1366 is modified to Phosphoserine. Composition is skewed to basic and acidic residues over residues 1393–1410 (DHPR…RAYS) and 1426–1437 (HEARERRREQPK). At S1441 the chain carries Phosphoserine. Over residues 1462–1483 (DSHKVLPRDLEKEDAPQEKERP) the composition is skewed to basic and acidic residues. 2 positions are modified to phosphoserine: S1488 and S1506. 2 disordered regions span residues 1512 to 1627 (QLKQ…KRVD) and 1642 to 1806 (ALKT…ENQV). The span at 1522–1531 (TEPKDTDTLV) shows a compositional bias: basic and acidic residues. The segment covering 1537 to 1568 (QYGTWTEQCQSGESLATESPDSSATSTRKQPP) has biased composition (polar residues). Residues S1555 and S1662 each carry the phosphoserine modification. Residues 1649–1666 (LSKRSRRRAPISHSLRRS) are compositionally biased toward basic residues. Composition is skewed to basic and acidic residues over residues 1667–1677 (RFSESESRSPL) and 1689–1714 (DSTE…ERTP). A phosphoserine mark is found at S1701, S1757, S1760, and S1786. The segment covering 1753–1764 (PQPKSPKSPFQP) has biased composition (low complexity).

This is an uncharacterized protein from Homo sapiens (Human).